The following is a 280-amino-acid chain: Chemotaxis protein methyltransferase 2 (280 aa).

The region spanning 10–280 (FGNQEFHYTR…SVGQTVYSPA (271 aa)) is the CheR-type methyltransferase domain. Residues Asn-85, Thr-87, Arg-91, Glu-125, Asp-150, 208-209 (NL), and 226-227 (RN) contribute to the S-adenosyl-L-methionine site.

In terms of assembly, interacts with the C-terminal pentapeptide GWEEF of the methyl-accepting chemotaxis protein McpB.

It catalyses the reaction L-glutamyl-[protein] + S-adenosyl-L-methionine = [protein]-L-glutamate 5-O-methyl ester + S-adenosyl-L-homocysteine. Its function is as follows. Methylation of the methyl-accepting chemotaxis proteins (MCP) to form gamma-glutamyl methyl ester residues in MCP. It specifically targets the McpB chemoreceptor. The sequence is that of Chemotaxis protein methyltransferase 2 from Pseudomonas aeruginosa (strain ATCC 15692 / DSM 22644 / CIP 104116 / JCM 14847 / LMG 12228 / 1C / PRS 101 / PAO1).